Reading from the N-terminus, the 283-residue chain is S-methyl-5'-thioadenosine phosphorylase (283 aa).

Phosphate is bound at residue T18. K51 is modified (N6-acetyllysine). Phosphate-binding positions include 60–61 (RH) and 93–94 (TA). M196 provides a ligand contact to substrate. T197 is a phosphate binding site. 220-222 (DYD) contacts substrate.

Belongs to the PNP/MTAP phosphorylase family. MTAP subfamily. As to quaternary structure, homotrimer. Ubiquitously expressed.

Its subcellular location is the cytoplasm. It localises to the nucleus. The catalysed reaction is S-methyl-5'-thioadenosine + phosphate = 5-(methylsulfanyl)-alpha-D-ribose 1-phosphate + adenine. The protein operates within amino-acid biosynthesis; L-methionine biosynthesis via salvage pathway; S-methyl-5-thio-alpha-D-ribose 1-phosphate from S-methyl-5'-thioadenosine (phosphorylase route): step 1/1. With respect to regulation, inhibited by 5'-methylthiotubercin and 5'-chloroformycin. Its function is as follows. Catalyzes the reversible phosphorylation of S-methyl-5'-thioadenosine (MTA) to adenine and 5-methylthioribose-1-phosphate. Involved in the breakdown of MTA, a major by-product of polyamine biosynthesis. Responsible for the first step in the methionine salvage pathway after MTA has been generated from S-adenosylmethionine. Has broad substrate specificity with 6-aminopurine nucleosides as preferred substrates. The sequence is that of S-methyl-5'-thioadenosine phosphorylase from Homo sapiens (Human).